Reading from the N-terminus, the 788-residue chain is DNA ligase (788 aa).

NAD(+)-binding positions include 35-39, 84-85, and Glu-124; these read DAEYD and SL. Catalysis depends on Lys-126, which acts as the N6-AMP-lysine intermediate. Residues Arg-147, Glu-184, Lys-300, and Lys-324 each coordinate NAD(+). Zn(2+) contacts are provided by Cys-418, Cys-421, Cys-448, and Cys-454. Residues 707 to 788 enclose the BRCT domain; that stretch reads AEGLPLAGQT…FIERLAQLGS (82 aa).

This sequence belongs to the NAD-dependent DNA ligase family. LigA subfamily. Requires Mg(2+) as cofactor. Mn(2+) serves as cofactor.

It catalyses the reaction NAD(+) + (deoxyribonucleotide)n-3'-hydroxyl + 5'-phospho-(deoxyribonucleotide)m = (deoxyribonucleotide)n+m + AMP + beta-nicotinamide D-nucleotide.. Its function is as follows. DNA ligase that catalyzes the formation of phosphodiester linkages between 5'-phosphoryl and 3'-hydroxyl groups in double-stranded DNA using NAD as a coenzyme and as the energy source for the reaction. It is essential for DNA replication and repair of damaged DNA. This chain is DNA ligase, found in Stutzerimonas stutzeri (strain A1501) (Pseudomonas stutzeri).